The chain runs to 45 residues: Pollen allergen Amb a 5 (45 aa).

4 disulfide bridges follow: C4–C39, C11–C26, C18–C32, and C19–C43.

As to quaternary structure, monomer.

The polypeptide is Pollen allergen Amb a 5 (Ambrosia artemisiifolia var. elatior (Short ragweed)).